A 471-amino-acid polypeptide reads, in one-letter code: Sestrin-2 (471 aa).

Met-1 is modified (N-acetylmethionine). The N-terminal domain; mediates the alkylhydroperoxide reductase activity stretch occupies residues Gly-57 to Thr-230. Residue Cys-116 is the Cysteine sulfenic acid (-SOH) intermediate of the active site. Residue Lys-166 forms a Glycyl lysine isopeptide (Lys-Gly) (interchain with G-Cter in ubiquitin) linkage. A disordered region spans residues Asp-212–Gly-241. Ser-240 carries the phosphoserine modification. The C-terminal domain; mediates TORC1 regulation stretch occupies residues Ala-299 to Thr-471. Residues Thr-365–Thr-368, Thr-377, and Glu-442 each bind L-leucine.

It belongs to the sestrin family. In terms of assembly, interacts with the GATOR2 complex which is composed of MIOS, SEC13, SEH1L, WDR24 and WDR59; the interaction is negatively regulated by leucine. Conveys leucine availability via direct interaction with SEH1L and WDR24 components of the GATOR2 complex. Interacts with RRAGA, RRAGB, RRAGC and RRAGD; may function as a guanine nucleotide dissociation inhibitor for RRAGs and regulate them. May interact with the TORC2 complex. Interacts with KEAP1, RBX1, SQSTM and ULK1; to regulate the degradation of KEAP1. May also associate with the complex composed of TSC1, TSC2 and the AMP-responsive protein kinase/AMPK to regulate TORC1 signaling. May interact with PRDX1. Phosphorylated by ULK1 at multiple sites. Post-translationally, ubiquitinated at Lys-166 by RNF167 via 'Lys-63'-linked polyubiquitination in response to leucine deprivation: ubiquitination promotes SESN2-interaction with the GATOR2 complex, leading to inhibit the TORC1 signaling pathway. Deubiquitinated at Lys-166 by STAMBPL1, promoting the TORC1 signaling pathway. Ubiquitinated by RNF186; ubiquitination mediates proteasomal degradation.

The protein resides in the cytoplasm. It catalyses the reaction a hydroperoxide + L-cysteinyl-[protein] = S-hydroxy-L-cysteinyl-[protein] + an alcohol. Its function is as follows. Functions as an intracellular leucine sensor that negatively regulates the mTORC1 signaling pathway through the GATOR complex. In absence of leucine, binds the GATOR subcomplex GATOR2 and prevents mTORC1 signaling. Binding of leucine to SESN2 disrupts its interaction with GATOR2 thereby activating the TORC1 signaling pathway. This stress-inducible metabolic regulator also plays a role in protection against oxidative and genotoxic stresses. May negatively regulate protein translation in response to endoplasmic reticulum stress, via mTORC1. May positively regulate the transcription by NFE2L2 of genes involved in the response to oxidative stress by facilitating the SQSTM1-mediated autophagic degradation of KEAP1. May also mediate TP53 inhibition of TORC1 signaling upon genotoxic stress. Moreover, may prevent the accumulation of reactive oxygen species (ROS) through the alkylhydroperoxide reductase activity born by the N-terminal domain of the protein. Was originally reported to contribute to oxidative stress resistance by reducing PRDX1. However, this could not be confirmed. This is Sestrin-2 from Bos taurus (Bovine).